Here is a 226-residue protein sequence, read N- to C-terminus: N-acetylmuramic acid 6-phosphate phosphatase (226 aa).

Aspartate 12 acts as the Nucleophile in catalysis. Positions 12, 14, and 171 each coordinate Mg(2+). Residue aspartate 14 is the Proton donor of the active site.

This sequence belongs to the HAD-like hydrolase superfamily. CbbY/CbbZ/Gph/YieH family. Phosphatase MupP subfamily. Mg(2+) serves as cofactor.

It carries out the reaction N-acetyl-D-muramate 6-phosphate + H2O = N-acetyl-D-muramate + phosphate. Its pathway is cell wall biogenesis; peptidoglycan recycling. In terms of biological role, specifically catalyzes the dephosphorylation of N-acetylmuramate 6-phosphate (MurNAc-6P) to MurNac. Is involved in peptidoglycan recycling as part of a cell wall recycling pathway that bypasses de novo biosynthesis of the peptidoglycan precursor UDP-MurNAc. Plays a role in intrinsic resistance to fosfomycin, which targets the de novo synthesis of UDP-MurNAc. This Pseudomonas aeruginosa (strain ATCC 15692 / DSM 22644 / CIP 104116 / JCM 14847 / LMG 12228 / 1C / PRS 101 / PAO1) protein is N-acetylmuramic acid 6-phosphate phosphatase.